A 42-amino-acid polypeptide reads, in one-letter code: Lebocin-like anionic peptide 1 (42 aa).

As to expression, hemolymph.

The protein resides in the secreted. In terms of biological role, antimicrobial protein. Has antibacterial activity against the Gram-positive bacteria M.luteus (MIC=22.7 uM) and L.monocytogenes (MIC=90.9 uM). Lacks antibacterial activity against the Gram-positive bacteria B.circulans, S.aureus, and S.lutea, and the Gram-negative bacteria E.coli D31, E.coli ATCC 25922, and S.typhimurium. Has antifungal activity against A.niger (MIC=90.9 uM) and T.harzianum (MIC=90.9 uM), but lacks antifungal activity against S.cerevisiae, P.pastoris, Z.marxianus, C.albicans, C.fructus, and F.oxysporum. The protein is Lebocin-like anionic peptide 1 of Galleria mellonella (Greater wax moth).